The following is a 227-amino-acid chain: Phosphoribosylformylglycinamidine synthase subunit PurQ (227 aa).

In terms of domain architecture, Glutamine amidotransferase type-1 spans 3-225 (FAVIVFPGSN…LKQWRETYVV (223 aa)). The Nucleophile role is filled by cysteine 86. Catalysis depends on residues histidine 194 and glutamate 196.

As to quaternary structure, part of the FGAM synthase complex composed of 1 PurL, 1 PurQ and 2 PurS subunits.

The protein resides in the cytoplasm. The catalysed reaction is N(2)-formyl-N(1)-(5-phospho-beta-D-ribosyl)glycinamide + L-glutamine + ATP + H2O = 2-formamido-N(1)-(5-O-phospho-beta-D-ribosyl)acetamidine + L-glutamate + ADP + phosphate + H(+). It catalyses the reaction L-glutamine + H2O = L-glutamate + NH4(+). It participates in purine metabolism; IMP biosynthesis via de novo pathway; 5-amino-1-(5-phospho-D-ribosyl)imidazole from N(2)-formyl-N(1)-(5-phospho-D-ribosyl)glycinamide: step 1/2. Functionally, part of the phosphoribosylformylglycinamidine synthase complex involved in the purines biosynthetic pathway. Catalyzes the ATP-dependent conversion of formylglycinamide ribonucleotide (FGAR) and glutamine to yield formylglycinamidine ribonucleotide (FGAM) and glutamate. The FGAM synthase complex is composed of three subunits. PurQ produces an ammonia molecule by converting glutamine to glutamate. PurL transfers the ammonia molecule to FGAR to form FGAM in an ATP-dependent manner. PurS interacts with PurQ and PurL and is thought to assist in the transfer of the ammonia molecule from PurQ to PurL. In Bacillus thuringiensis (strain Al Hakam), this protein is Phosphoribosylformylglycinamidine synthase subunit PurQ.